Consider the following 459-residue polypeptide: ATP synthase subunit beta (459 aa).

149–156 lines the ATP pocket; it reads GGAGVGKT.

This sequence belongs to the ATPase alpha/beta chains family. As to quaternary structure, F-type ATPases have 2 components, CF(1) - the catalytic core - and CF(0) - the membrane proton channel. CF(1) has five subunits: alpha(3), beta(3), gamma(1), delta(1), epsilon(1). CF(0) has three main subunits: a(1), b(2) and c(9-12). The alpha and beta chains form an alternating ring which encloses part of the gamma chain. CF(1) is attached to CF(0) by a central stalk formed by the gamma and epsilon chains, while a peripheral stalk is formed by the delta and b chains.

The protein resides in the cell inner membrane. It catalyses the reaction ATP + H2O + 4 H(+)(in) = ADP + phosphate + 5 H(+)(out). Functionally, produces ATP from ADP in the presence of a proton gradient across the membrane. The catalytic sites are hosted primarily by the beta subunits. This chain is ATP synthase subunit beta, found in Pseudomonas syringae pv. syringae (strain B728a).